The primary structure comprises 232 residues: ATP-dependent dethiobiotin synthetase BioD (232 aa).

16–21 (GVGKTV) lines the ATP pocket. Thr20 lines the Mg(2+) pocket. Lys41 is an active-site residue. Residue Thr45 participates in substrate binding. Residues Asp52, 111 to 114 (EGIG), 171 to 172 (NQ), 200 to 202 (PLS), and Glu207 contribute to the ATP site. Residues Asp52 and Glu111 each coordinate Mg(2+).

It belongs to the dethiobiotin synthetase family. Homodimer. Mg(2+) is required as a cofactor.

It localises to the cytoplasm. It catalyses the reaction (7R,8S)-7,8-diammoniononanoate + CO2 + ATP = (4R,5S)-dethiobiotin + ADP + phosphate + 3 H(+). It carries out the reaction (7R,8S)-8-amino-7-(carboxyamino)nonanoate + ATP = (4R,5S)-dethiobiotin + ADP + phosphate + H(+). The protein operates within cofactor biosynthesis; biotin biosynthesis; biotin from 7,8-diaminononanoate: step 1/2. In terms of biological role, catalyzes a mechanistically unusual reaction, the ATP-dependent insertion of CO2 between the N7 and N8 nitrogen atoms of 7,8-diaminopelargonic acid (DAPA, also called 7,8-diammoniononanoate) to form a ureido ring. This archaea does not encode bioA (which catalyzes the formation of the precursor for this reaction in the cannonical pathway), instead it encodes bioU, which replaces bioA and also performs the first half of the cannonical BioD reaction. Thus in this archaea BioD has a different substrate. This chain is ATP-dependent dethiobiotin synthetase BioD, found in Haloferax mediterranei (strain ATCC 33500 / DSM 1411 / JCM 8866 / NBRC 14739 / NCIMB 2177 / R-4) (Halobacterium mediterranei).